The following is a 592-amino-acid chain: Frizzled-5 (592 aa).

Residues 1–38 form the signal peptide; the sequence is MRKPADEHHFTMETSGMHLVGFWLHVLLLFQLSGLGDS. The Extracellular portion of the chain corresponds to 39 to 248; the sequence is ASKDIVCEPI…QDERTFTTFW (210 aa). The FZ domain maps to 40-161; it reads SKDIVCEPIT…GDTDRLCMDR (122 aa). Disulfide bonds link cysteine 45–cysteine 106, cysteine 53–cysteine 99, cysteine 90–cysteine 128, cysteine 117–cysteine 158, and cysteine 121–cysteine 145. A disordered region spans residues 162-192; it reads NSSETTTLSPPFPKPTPKGTPRHRATAKSAP. Residues 249-269 form a helical membrane-spanning segment; the sequence is IGLWSVLCFVSTFTTVATFLI. Residues 270–280 lie on the Cytoplasmic side of the membrane; sequence DMERFKYPERP. A helical membrane pass occupies residues 281–301; it reads IIFLAACYLFVSLGYIVRLLA. The Extracellular segment spans residues 302–327; it reads GHERVACEGTGDQQHILYDTTGPALC. A helical transmembrane segment spans residues 328–348; the sequence is TLVFLLIYFFGMASSIWWVVL. Residues 349-370 are Cytoplasmic-facing; the sequence is SFTWFLAAGMKWGNEAIAGYSQ. A helical membrane pass occupies residues 371 to 391; that stretch reads YFHLAAWLVPSVKSIAVLALS. The Extracellular segment spans residues 392–414; the sequence is SVDGDPVAGICYVGNQSLEGLRG. The chain crosses the membrane as a helical span at residues 415–435; that stretch reads FVLAPLVVYLFTGSLFLLAGF. The Cytoplasmic portion of the chain corresponds to 436-461; it reads VSLFRIRSVIKQGGTKTDKLEKLMIR. A helical membrane pass occupies residues 462 to 482; that stretch reads IGLFTVLYTVPATIVVACLVY. Topologically, residues 483-512 are extracellular; that stretch reads EQHYRPSWERALACSCPSERQRLGMGPDYA. Residues 513–533 traverse the membrane as a helical segment; it reads VFMLKYFMCLVVGITSGVWIW. The Cytoplasmic portion of the chain corresponds to 534–592; sequence SGKTLESWRRFIARYVPCRTRKPPVSASSMYSEASTALTARAGTAPTGTYHKSAPSSHV.

It belongs to the G-protein coupled receptor Fz/Smo family.

The protein resides in the cell membrane. Its subcellular location is the golgi apparatus membrane. The protein localises to the synapse. It is found in the perikaryon. It localises to the cell projection. The protein resides in the dendrite. Its subcellular location is the axon. Receptor for Wnt proteins. Following binding, activates the canonical Wnt/beta-catenin signaling pathway. Also activates wnt non-canonical signaling. In neurons, activation of the Wnt pathway promotes formation of synapses. May be involved in transduction and intercellular transmission of polarity information during tissue morphogenesis and/or in differentiated tissues. Plays a role in early eye development, possibly through wnt non-canonical signaling. As a receptor for wnt11, promotes eye formation, at least partially, by antagonizing the Wnt/beta-catenin pathway. In addition, promotes coherence of eye field cells, potentially contributing to the coordinated morphogenetic behaviors of cells in the nascent eye field. This chain is Frizzled-5 (fzd5), found in Danio rerio (Zebrafish).